Here is a 169-residue protein sequence, read N- to C-terminus: Allophycocyanin subunit beta-18 (169 aa).

N72 bears the N4-methylasparagine mark. C82 contributes to the (2R,3E)-phycocyanobilin binding site.

Belongs to the phycobiliprotein family. As to quaternary structure, heterodimer of an alpha and a beta chain. In terms of processing, contains one covalently linked phycocyanobilin chromophore.

It localises to the plastid. The protein resides in the cyanelle thylakoid membrane. Light-harvesting photosynthetic bile pigment-protein from the phycobiliprotein complex. Allophycocyanin has a maximum absorption at approximately 650 nanometers. The protein is Allophycocyanin subunit beta-18 (apcF) of Cyanophora paradoxa.